The chain runs to 692 residues: Furin-like protease kpc-1 (692 aa).

An N-terminal signal peptide occupies residues 1–33 (MSNISWYRHCSVRLQLVTLALFLLLGSASLGSA). A glycan (N-linked (GlcNAc...) asparagine) is linked at asparagine 3. The propeptide occupies 34–139 (HIDEEFEDDV…QQVAKRRVKR (106 aa)). Topologically, residues 140-670 (GYRRIRRHTD…RSVQMEATSS (531 aa)) are lumenal. Residues 152–177 (DIFEEDDDGTQISKSRNRKHPDPNDP) form a disordered region. Aspartate 176 is a binding site for Ca(2+). The Peptidase S8 domain maps to 182 to 503 (MWYLNRGEHH…YGLMDAGAMV (322 aa)). Catalysis depends on aspartate 221, which acts as the Charge relay system. Aspartate 222 provides a ligand contact to substrate. Ca(2+) contacts are provided by aspartate 230, aspartate 242, aspartate 247, and aspartate 249. The segment at 230–249 (DISPNYDERASYDVNDRDND) is disordered. 259–260 (EN) provides a ligand contact to substrate. The Charge relay system role is filled by histidine 262. Isoleucine 273 contacts Ca(2+). Residue asparagine 275 is glycosylated (N-linked (GlcNAc...) asparagine). Asparagine 276, leucine 278, and isoleucine 280 together coordinate Ca(2+). Disulfide bonds link cysteine 279-cysteine 428 and cysteine 371-cysteine 401. Substrate is bound by residues glutamate 304, 321 to 326 (SWGPDD), aspartate 332, and 360 to 363 (ASGN). Ca(2+) is bound at residue aspartate 326. Ca(2+) is bound at residue aspartate 369. 2 residues coordinate substrate: aspartate 374 and tyrosine 376. Glutamate 399 contributes to the Ca(2+) binding site. Catalysis depends on serine 436, which acts as the Charge relay system. Residue serine 436 participates in substrate binding. 2 N-linked (GlcNAc...) asparagine glycosylation sites follow: asparagine 455 and asparagine 487. One can recognise a P/Homo B domain in the interval 512–646 (VDEQHRCRQF…ELVLYGTDRE (135 aa)). Cysteine 518 and cysteine 544 are joined by a disulfide. A Cell attachment site motif is present at residues 570-572 (RGD). The chain crosses the membrane as a helical span at residues 671–692 (GTQYSIFHVITLVILTFSQILY).

Belongs to the peptidase S8 family. Furin subfamily. As to quaternary structure, interacts (via extracellular domain) with receptor dma-1 (via extracellular domain); the interaction promotes dma-1 internalization. Ca(2+) serves as cofactor. In terms of tissue distribution, expressed in the nervous system including the ventral nerve cord, the nerve ring and the retrovesicular ganglion, and in epithelial cells. Expressed in IL2 neurons. Expressed in PVD mechanosensory neurons. Expressed in pharynx with strong expression in the g2 pharyngeal gland cells and vpi pharyngeal intestinal valve cells. Expressed in intestine.

It is found in the cell membrane. The protein localises to the perikaryon. The protein resides in the cell projection. It localises to the axon. Functionally, furin-like protease which cleaves proproteins at the RX(K/R)R consensus motif. During neuronal development, regulates the formation and extension of dendrite branches and cellular positioning of various type of neurons. Together with chin-1 and cdc-42, plays a role in the development of the neuropil and is required for the guidance of axons from neurons, including SubL pioneer neurons and AIY interneurons, into the nerve ring. Its role in axon guidance in glia and pioneer neurons may be through ensuring the fmi-1 protein is correctly localized to the nerve ring. Promotes the formation, extension and self-avoidance of dendritic branches of PVD and FLP mechanosensory neurons. In PVD neurons, regulates plasma membrane levels of branching receptor dma-1 by targeting it to late endosomes and thus promotes normal dendrite branching and dendrite self-avoidance. Also controls dendrite extension in AIY and D-type motoneurons, dendrite branching in AQR sensory neurons and VC4/5 motoneurons, the normal number of dendritic branches in AVL neurons and the positioning of HSN and ALM/PLM neurons. Dispensable for maintaining dendrite branching in adults. Also regulates dauer-specific dendritic branching of IL2 neurons and dauer-specific nictation behavior. Under adverse environmental conditions, may promote dauer formation by processing insulin-like proteins ins-1 and ins-18, two daf-2/InsR antagonists. This is Furin-like protease kpc-1 from Caenorhabditis elegans.